The following is a 257-amino-acid chain: Thiazole synthase (257 aa).

The Schiff-base intermediate with DXP role is filled by Lys95. 1-deoxy-D-xylulose 5-phosphate-binding positions include Gly156, 182–183, and 204–205; these read AG and NT.

Belongs to the ThiG family. In terms of assembly, homotetramer. Forms heterodimers with either ThiH or ThiS.

The protein resides in the cytoplasm. The catalysed reaction is [ThiS sulfur-carrier protein]-C-terminal-Gly-aminoethanethioate + 2-iminoacetate + 1-deoxy-D-xylulose 5-phosphate = [ThiS sulfur-carrier protein]-C-terminal Gly-Gly + 2-[(2R,5Z)-2-carboxy-4-methylthiazol-5(2H)-ylidene]ethyl phosphate + 2 H2O + H(+). Its pathway is cofactor biosynthesis; thiamine diphosphate biosynthesis. Catalyzes the rearrangement of 1-deoxy-D-xylulose 5-phosphate (DXP) to produce the thiazole phosphate moiety of thiamine. Sulfur is provided by the thiocarboxylate moiety of the carrier protein ThiS. In vitro, sulfur can be provided by H(2)S. This chain is Thiazole synthase, found in Fusobacterium nucleatum subsp. nucleatum (strain ATCC 25586 / DSM 15643 / BCRC 10681 / CIP 101130 / JCM 8532 / KCTC 2640 / LMG 13131 / VPI 4355).